A 149-amino-acid chain; its full sequence is Calmodulin-like protein 3 (149 aa).

4 EF-hand domains span residues 8-43, 44-79, 81-116, and 117-149; these read EQVT…LGQN, PTEA…KMKD, DNEE…LGEK, and LSDE…LVSK. Residues aspartate 21, aspartate 23, aspartate 25, cysteine 27, glutamate 32, aspartate 57, aspartate 59, asparagine 61, threonine 63, glutamate 68, aspartate 94, aspartate 96, asparagine 98, glutamate 105, aspartate 130, aspartate 132, aspartate 134, glutamine 136, and glutamate 141 each contribute to the Ca(2+) site.

It belongs to the calmodulin family. Interacts with MYO10, the interaction is calcium-dependent and essential for MYO10 function in filopodial extension. As to expression, expressed in normal mammary, prostate, cervical, and epidermal tissues. It is greatly reduced or undetectable in transformed cells.

May function as a specific light chain of unconventional myosin-10 (MYO10), also enhances MYO10 translation, possibly by acting as a chaperone for the emerging MYO10 heavy chain protein. May compete with calmodulin by binding, with different affinities, to cellular substrates. This Homo sapiens (Human) protein is Calmodulin-like protein 3 (CALML3).